A 179-amino-acid chain; its full sequence is Protein GrpE (179 aa).

The interval 1-45 is disordered; sequence MSEEKLTQDPTAEEEQTETADQQESADVNWEQEAAHWKAQAEEHQ. Basic and acidic residues predominate over residues 33 to 45; sequence EAAHWKAQAEEHQ.

Belongs to the GrpE family. Homodimer.

Its subcellular location is the cytoplasm. Participates actively in the response to hyperosmotic and heat shock by preventing the aggregation of stress-denatured proteins, in association with DnaK and GrpE. It is the nucleotide exchange factor for DnaK and may function as a thermosensor. Unfolded proteins bind initially to DnaJ; upon interaction with the DnaJ-bound protein, DnaK hydrolyzes its bound ATP, resulting in the formation of a stable complex. GrpE releases ADP from DnaK; ATP binding to DnaK triggers the release of the substrate protein, thus completing the reaction cycle. Several rounds of ATP-dependent interactions between DnaJ, DnaK and GrpE are required for fully efficient folding. This is Protein GrpE from Brevibacillus choshinensis.